The sequence spans 465 residues: tRNA-2-methylthio-N(6)-dimethylallyladenosine synthase (465 aa).

The region spanning 26–141 is the MTTase N-terminal domain; the sequence is MRAHIITYGC…LPEALKANER (116 aa). Residues C35, C71, C104, C173, C177, and C180 each contribute to the [4Fe-4S] cluster site. Residues 159–388 form the Radical SAM core domain; it reads PKGALSAHVT…IEKQKEWSYR (230 aa). One can recognise a TRAM domain in the interval 391–453; sequence LEWVGKTVEV…PHLLFGEVVG (63 aa).

Belongs to the methylthiotransferase family. MiaB subfamily. As to quaternary structure, monomer. [4Fe-4S] cluster serves as cofactor.

It localises to the cytoplasm. It carries out the reaction N(6)-dimethylallyladenosine(37) in tRNA + (sulfur carrier)-SH + AH2 + 2 S-adenosyl-L-methionine = 2-methylsulfanyl-N(6)-dimethylallyladenosine(37) in tRNA + (sulfur carrier)-H + 5'-deoxyadenosine + L-methionine + A + S-adenosyl-L-homocysteine + 2 H(+). Functionally, catalyzes the methylthiolation of N6-(dimethylallyl)adenosine (i(6)A), leading to the formation of 2-methylthio-N6-(dimethylallyl)adenosine (ms(2)i(6)A) at position 37 in tRNAs that read codons beginning with uridine. In Thermus thermophilus (strain ATCC BAA-163 / DSM 7039 / HB27), this protein is tRNA-2-methylthio-N(6)-dimethylallyladenosine synthase.